We begin with the raw amino-acid sequence, 486 residues long: MTNKSNKILNTNITKLVNQPYKYGFSTVIEKDIIEKGLNEDVICLISKKKNEPKFLLEFRLKAFKKWKEMKCPDWAQIKFSEIDYQDIIYYSAPKVKKKLNSLDEVDPELLKTFEKLGISLTEQKRLANVAIDAVFDSVSIATTFKEELAECGVIFSSISEAIQEYPELIEKYLGSVVPIGDNYFSALNSAVFTDGSFCYIPKDTICPLELSTYFRINDQKSGQFERTLIVAEKNSQVSYLEGCTAPQYDSNQLHAAVVELVALENADIKYSTVQNWYAGNNYGEGGIYNFVTKRGLCAGSNSKISWTQVETGSNITWKYPSCLLVGDKAKGEFYSVALTNNYQQADTGSKMIHVGKNTRSRIVSKGISAGNSKNTYRGLVNISNKAIGARNYSQCDSLLIGNLSNANTFPFISVQNPTAKIEHEASTSKIGEEQIFYFLQRGIPIEKGVELMISGFCQEVFTELPLEFAAEADRLLTLKLEGSVG.

This sequence belongs to the iron-sulfur cluster assembly SufBD family.

The protein resides in the plastid. It localises to the chloroplast. The chain is Iron-sulfur cluster assembly SufBD family protein ycf24 (ycf24) from Trieres chinensis (Marine centric diatom).